The following is a 70-amino-acid chain: Small ribosomal subunit protein bS21 (70 aa).

This sequence belongs to the bacterial ribosomal protein bS21 family.

The chain is Small ribosomal subunit protein bS21 from Helicobacter hepaticus (strain ATCC 51449 / 3B1).